Consider the following 320-residue polypeptide: MAKRTAPLLLLTLAVGLAGGSQGDREPVYRDCVLRCEERNCSGDALKHFRSRQPIYMSLAGWTCRDDCKYECMWFTVGLYLQEGHRVPQFHGKWPFSRFLFIQEPASAVASLLNGLASLVMLCRYRASVPASSPMYHTCMAFAWVSLNAWFWSTVFHTRDTDLTEKMDYFCASAVILHSVYLCCVRTVGLQHPSVASAFGALLLLLLTGHISYLSLVHFDYGYNMMANVAIGLVNLAWWLVWCLRNRQRLPHTRRCMVVVVLLQGLSLLELLDFPPLFWVLDAHAIWHISTIPVHTLFFRFLEDDSLYLLKESGAMFKLD.

The first 23 residues, 1-23 (MAKRTAPLLLLTLAVGLAGGSQG), serve as a signal peptide directing secretion. Residues 24–98 (DREPVYRDCV…QFHGKWPFSR (75 aa)) are Lumenal-facing. An N-linked (GlcNAc...) asparagine glycan is attached at N40. A helical membrane pass occupies residues 99-119 (FLFIQEPASAVASLLNGLASL). At 120-135 (VMLCRYRASVPASSPM) the chain is on the cytoplasmic side. The helical transmembrane segment at 136–156 (YHTCMAFAWVSLNAWFWSTVF) threads the bilayer. The Lumenal portion of the chain corresponds to 157–169 (HTRDTDLTEKMDY). A helical transmembrane segment spans residues 170 to 190 (FCASAVILHSVYLCCVRTVGL). Residues 191–198 (QHPSVASA) are Cytoplasmic-facing. A helical membrane pass occupies residues 199–219 (FGALLLLLLTGHISYLSLVHF). Over 220-223 (DYGY) the chain is Lumenal. The chain crosses the membrane as a helical span at residues 224 to 244 (NMMANVAIGLVNLAWWLVWCL). At 245 to 257 (RNRQRLPHTRRCM) the chain is on the cytoplasmic side. The chain crosses the membrane as a helical span at residues 258–278 (VVVVLLQGLSLLELLDFPPLF). W279 is a topological domain (lumenal). A helical membrane pass occupies residues 280–299 (VLDAHAIWHISTIPVHTLFF). The Cytoplasmic portion of the chain corresponds to 300–320 (RFLEDDSLYLLKESGAMFKLD).

This sequence belongs to the PGAP3 family.

The protein localises to the golgi apparatus membrane. Its function is as follows. Involved in the fatty acid remodeling steps of GPI-anchor maturation where the unsaturated acyl chain at sn-2 of inositol phosphate is replaced by a saturated stearoyl chain. May catalyze the first step of the fatty acid remodeling, by removing the unsaturated acyl chain at sn-2 of inositol phosphate, generating a lyso-GPI intermediate. The fatty acid remodeling steps is critical for the integration of GPI-APs into lipid rafts. This is GPI-specific phospholipase A2-like PGAP3 from Mus musculus (Mouse).